We begin with the raw amino-acid sequence, 352 residues long: Adenosine deaminase (352 aa).

His-24 and His-26 together coordinate Zn(2+). Substrate contacts are provided by His-26, Asp-28, and Gly-181. His-208 contributes to the Zn(2+) binding site. Residue Glu-211 is the Proton donor of the active site. Residue Asp-290 coordinates Zn(2+).

It belongs to the metallo-dependent hydrolases superfamily. Adenosine and AMP deaminases family. Adenosine deaminase subfamily. It depends on Zn(2+) as a cofactor.

The enzyme catalyses adenosine + H2O + H(+) = inosine + NH4(+). It carries out the reaction 2'-deoxyadenosine + H2O + H(+) = 2'-deoxyinosine + NH4(+). Functionally, catalyzes the hydrolytic deamination of adenosine and 2-deoxyadenosine. The chain is Adenosine deaminase from Lactococcus lactis subsp. lactis (strain IL1403) (Streptococcus lactis).